A 330-amino-acid polypeptide reads, in one-letter code: Free fatty acid receptor 2 (330 aa).

Topologically, residues 1–8 (MTPDWHSS) are extracellular. A helical membrane pass occupies residues 9 to 29 (LILTAYILIFLTGLPANLLAL). At 30–43 (RAFMGRVRQPQPAP) the chain is on the cytoplasmic side. A helical transmembrane segment spans residues 44-64 (VHILLLNLTLADLLLLLLLPF). Topologically, residues 65–79 (RIVEAASNFRWYLPK) are extracellular. The helical transmembrane segment at 80–100 (IVCALTGFGFYSSIYCSTWLL) threads the bilayer. Residues 101–126 (AGISMERYLGVAFPVQYKLSRRPLYG) lie on the Cytoplasmic side of the membrane. A helical membrane pass occupies residues 127 to 147 (VIAALVAWIMSFGHCTIVIIV). Topologically, residues 148 to 184 (QYLNSTEQVGTENQITCYENFTQEQLDVVLPVRLELC) are extracellular. N-linked (GlcNAc...) asparagine glycosylation is found at Asn-151 and Asn-167. A helical membrane pass occupies residues 185–205 (LVLFFVPMAVTIFCYWRFVWI). The Cytoplasmic segment spans residues 206–219 (MLTQPHVGAQRRRR). A helical membrane pass occupies residues 220 to 240 (AVGLAVVTLLNFLVCFGPYNM). Over 241–255 (SHLVGFYLRQSPSWR) the chain is Extracellular. A helical membrane pass occupies residues 256 to 276 (VEAVVFSSLNASLDPLLFYFS). Residues 277-330 (SSVVRRAFGKGLLLIRNPASSMLGRGAKETVEGTKMDRGGSQAEGVQSSEFVTE) are Cytoplasmic-facing. The tract at residues 306-330 (TVEGTKMDRGGSQAEGVQSSEFVTE) is disordered. The span at 320-330 (EGVQSSEFVTE) shows a compositional bias: polar residues.

It belongs to the G-protein coupled receptor 1 family. As to quaternary structure, interacts with FCN1 (via Fibrinogen C-terminal domain). As to expression, highly expressed in hematopoietic tissues, such as spleen and bone marrow, with highest levels in a subset of immune cells, including monocytes or neutrophils. Expressed in adipose tissues with high expression in differentiating adipocytes. Expressed by intestinal endocrine cells.

It is found in the cell membrane. Its function is as follows. G protein-coupled receptor that is activated by a major product of dietary fiber digestion, the short chain fatty acids (SCFAs), and that plays a role in the regulation of whole-body energy homeostasis and in intestinal immunity. In omnivorous mammals, the short chain fatty acids acetate, propionate and butyrate are produced primarily by the gut microbiome that metabolizes dietary fibers. SCFAs serve as a source of energy but also act as signaling molecules. That G protein-coupled receptor is probably coupled to the pertussis toxin-sensitive, G(i/o)-alpha family of G proteins but also to the Gq family. Its activation results in the formation of inositol 1,4,5-trisphosphate, the mobilization of intracellular calcium, the phosphorylation of the MAPK3/ERK1 and MAPK1/ERK2 kinases and the inhibition of intracellular cAMP accumulation. May play a role in glucose homeostasis by regulating the secretion of GLP-1, in response to short-chain fatty acids accumulating in the intestine. May also regulate the production of LEP/Leptin, a hormone acting on the central nervous system to inhibit food intake. Finally, may also regulate whole-body energy homeostasis through adipogenesis regulating both differentiation and lipid storage of adipocytes. In parallel to its role in energy homeostasis, may also mediate the activation of the inflammatory and immune responses by SCFA in the intestine, regulating the rapid production of chemokines and cytokines. May also play a role in the resolution of the inflammatory response and control chemotaxis in neutrophils. In addition to SCFAs, may also be activated by the extracellular lectin FCN1 in a process leading to activation of monocytes and inducing the secretion of interleukin-8/IL-8 in response to the presence of microbes. In Mus musculus (Mouse), this protein is Free fatty acid receptor 2 (Ffar2).